The sequence spans 415 residues: Serine hydroxymethyltransferase (415 aa).

(6S)-5,6,7,8-tetrahydrofolate contacts are provided by residues L121 and 125 to 127 (GHL). K229 bears the N6-(pyridoxal phosphate)lysine mark. Position 352–354 (352–354 (TPF)) interacts with (6S)-5,6,7,8-tetrahydrofolate.

Belongs to the SHMT family. Homodimer. It depends on pyridoxal 5'-phosphate as a cofactor.

It localises to the cytoplasm. The enzyme catalyses (6R)-5,10-methylene-5,6,7,8-tetrahydrofolate + glycine + H2O = (6S)-5,6,7,8-tetrahydrofolate + L-serine. It participates in one-carbon metabolism; tetrahydrofolate interconversion. The protein operates within amino-acid biosynthesis; glycine biosynthesis; glycine from L-serine: step 1/1. Its function is as follows. Catalyzes the reversible interconversion of serine and glycine with tetrahydrofolate (THF) serving as the one-carbon carrier. This reaction serves as the major source of one-carbon groups required for the biosynthesis of purines, thymidylate, methionine, and other important biomolecules. Also exhibits THF-independent aldolase activity toward beta-hydroxyamino acids, producing glycine and aldehydes, via a retro-aldol mechanism. This Chromobacterium violaceum (strain ATCC 12472 / DSM 30191 / JCM 1249 / CCUG 213 / NBRC 12614 / NCIMB 9131 / NCTC 9757 / MK) protein is Serine hydroxymethyltransferase.